The following is a 392-amino-acid chain: MEDVTLHIVERPYSGFPDASSEGPEPTQGEARATEEPSGTGSDELIKSDQVNGVLVLSLLDKIIGAVDQIQLTQAQLEERQAEMEGAVQSIQGELSKLGKAHATTSNTVSKLLEKVRKVSVNVKTVRGSLERQAGQIKKLEVNEAELLRRRNFKVMIYQDEVKLPAKLSVSKSLKESEALPEKEGDELGEGERPEDDTAAIELSSDEAVEVEEVIEESRAERIKRSGLRRVDDFKKAFSKEKMEKTKVRTRENLEKTRLKTKENLEKTRHTLEKRMNKLGTRLVPVERREKLKTSRDKLRKSFTPDHVVYARSKTAVYKVPPFTFHVKKIREGEVEVLKATEMVEVGPEDDEVGAERGEATDLLRGSSPDVHTLLEITEESDAVLVDKSDSD.

An N-acetylmethionine modification is found at Met1. Positions 1-10 (MEDVTLHIVE) are enriched in basic and acidic residues. Residues 1–45 (MEDVTLHIVERPYSGFPDASSEGPEPTQGEARATEEPSGTGSDEL) form a disordered region. Residues 1–100 (MEDVTLHIVE…IQGELSKLGK (100 aa)) form a required for homotrimerization and for interaction with CAVIN2 and CAVIN3 region. Phosphoserine occurs at positions 21 and 38. Thr40 carries the phosphothreonine modification. A phosphoserine mark is found at Ser42 and Ser48. Residues 54–64 (VLVLSLLDKII) are nuclear export signal. The leucine-zipper 1 stretch occupies residues 55 to 77 (LVLSLLDKIIGAVDQIQLTQAQL). Residue Lys118 forms a Glycyl lysine isopeptide (Lys-Gly) (interchain with G-Cter in SUMO2) linkage. Ser120 is modified (phosphoserine). Lys124 is covalently cross-linked (Glycyl lysine isopeptide (Lys-Gly) (interchain with G-Cter in SUMO2)). Residues 138–154 (KKLEVNEAELLRRRNFK) form a nuclear localization signal region. Tyr158 carries the phosphotyrosine modification. Lys163 is covalently cross-linked (Glycyl lysine isopeptide (Lys-Gly) (interchain with G-Cter in SUMO1); alternate). A Glycyl lysine isopeptide (Lys-Gly) (interchain with G-Cter in SUMO2); alternate cross-link involves residue Lys163. A Glycyl lysine isopeptide (Lys-Gly) (interchain with G-Cter in SUMO2) cross-link involves residue Lys167. The segment at 168-188 (LSVSKSLKESEALPEKEGDEL) is leucine-zipper 2. A phosphoserine mark is found at Ser169 and Ser171. Residue Lys172 forms a Glycyl lysine isopeptide (Lys-Gly) (interchain with G-Cter in SUMO2) linkage. A phosphoserine mark is found at Ser173 and Ser177. A compositionally biased stretch (basic and acidic residues) spans 173 to 183 (SLKESEALPEK). The disordered stretch occupies residues 173-197 (SLKESEALPEKEGDELGEGERPEDD). The span at 184–197 (EGDELGEGERPEDD) shows a compositional bias: acidic residues. Thr198 is subject to Phosphothreonine. Residues 201 to 284 (IELSSDEAVE…RMNKLGTRLV (84 aa)) are a coiled coil. Ser204 and Ser205 each carry phosphoserine. A nuclear localization signal region spans residues 235–251 (KKAFSKEKMEKTKVRTR). The leucine-zipper 3 stretch occupies residues 259 to 299 (LKTKENLEKTRHTLEKRMNKLGTRLVPVERREKLKTSRDKL). Ser302 is modified (phosphoserine). Phosphothreonine is present on Thr304. Position 310 is a phosphotyrosine (Tyr310). A Glycyl lysine isopeptide (Lys-Gly) (interchain with G-Cter in SUMO2) cross-link involves residue Lys328. Residues 347 to 367 (GPEDDEVGAERGEATDLLRGS) form a disordered region. Phosphoserine is present on residues Ser367, Ser368, Ser381, Ser389, and Ser391.

Belongs to the CAVIN family. As to quaternary structure, component of the CAVIN complex composed of CAVIN1, CAVIN2, CAVIN3 and CAVIN4. Homotrimer. Interacts with LIPE in the adipocyte cytoplasm. Interacts with RNA polymerase I subunit POLR1A/RPA1. Interacts with TTF1. Binds the 3' end of pre-rRNA. Interacts with transcription factor ZNF148. Interacts with CAV1, CAVIN2 and CAVIN3. Interacts with CAVIN4. Post-translationally, phosphorylated. Present in active and inactive forms. Changes in phosphorylation pattern may alter activity. Phosphorylation at Tyr-158 is essential for its function in the regulation of the ribosomal transcriptional activity. Monoubiquitinated. Expressed in the heart, stomach, adipose tissue and lung (at protein level). Expressed in testis, kidney, muscle, liver, spleen and brain.

It is found in the membrane. The protein resides in the caveola. The protein localises to the cell membrane. Its subcellular location is the microsome. It localises to the endoplasmic reticulum. It is found in the cytoplasm. The protein resides in the cytosol. The protein localises to the mitochondrion. Its subcellular location is the nucleus. In terms of biological role, plays an important role in caveolae formation and organization. Essential for the formation of caveolae in all tissues. Core component of the CAVIN complex which is essential for recruitment of the complex to the caveolae in presence of calveolin-1 (CAV1). Essential for normal oligomerization of CAV1. Promotes ribosomal transcriptional activity in response to metabolic challenges in the adipocytes and plays an important role in the formation of the ribosomal transcriptional loop. Dissociates transcription complexes paused by DNA-bound TTF1, thereby releasing both RNA polymerase I and pre-RNA from the template. The caveolae biogenesis pathway is required for the secretion of proteins such as GASK1A. This Mus musculus (Mouse) protein is Caveolae-associated protein 1 (Cavin1).